A 310-amino-acid chain; its full sequence is Ribosomal RNA small subunit methyltransferase H (310 aa).

Residues 32–34 (GGH), D52, F79, D100, and Q107 contribute to the S-adenosyl-L-methionine site.

Belongs to the methyltransferase superfamily. RsmH family.

It is found in the cytoplasm. It catalyses the reaction cytidine(1402) in 16S rRNA + S-adenosyl-L-methionine = N(4)-methylcytidine(1402) in 16S rRNA + S-adenosyl-L-homocysteine + H(+). Specifically methylates the N4 position of cytidine in position 1402 (C1402) of 16S rRNA. The polypeptide is Ribosomal RNA small subunit methyltransferase H (Geobacillus kaustophilus (strain HTA426)).